The following is a 330-amino-acid chain: DNA-directed RNA polymerase I subunit RPA43 (330 aa).

Residues 251 to 330 (ADVTDVTPQE…ANFESPKKRQ (80 aa)) form a disordered region. Phosphoserine is present on residues Ser306, Ser318, and Ser325. Basic and acidic residues predominate over residues 317–330 (HSEEANFESPKKRQ).

Belongs to the eukaryotic RPA43 RNA polymerase subunit family. Component of the RNA polymerase I (Pol I) complex consisting of 13 subunits: a ten-subunit catalytic core composed of POLR1A/RPA1, POLR1B/RPA2, POLR1C/RPAC1, POLR1D/RPAC2, POLR1H/RPA12, POLR2E/RPABC1, POLR2F/RPABC2, POLR2H/RPABC3, POLR2K/RPABC4 and POLR2L/RPABC5; a mobile stalk subunit POLR1F/RPA43 protruding from the core and additional subunits homologous to general transcription factors POLR1E/RPA49 and POLR1G/RPA34. Interacts with RRN3/TIF-IA. Interacts with RRN3/TIF-IA. As to expression, widely expressed.

The protein resides in the nucleus. The protein localises to the nucleolus. Component of RNA polymerase I (Pol I), a DNA-dependent RNA polymerase which synthesizes ribosomal RNA precursors using the four ribonucleoside triphosphates as substrates. Through its association with RRN3/TIF-IA may be involved in recruitment of Pol I to rDNA promoters. This is DNA-directed RNA polymerase I subunit RPA43 from Mus musculus (Mouse).